We begin with the raw amino-acid sequence, 227 residues long: Phosphoribosylformylglycinamidine synthase subunit PurQ (227 aa).

The 226-residue stretch at 2 to 227 folds into the Glutamine amidotransferase type-1 domain; that stretch reads RWAIVRFPGA…FLGLVKEVAR (226 aa). Cys-85 (nucleophile) is an active-site residue. Active-site residues include His-200 and Glu-202.

As to quaternary structure, part of the FGAM synthase complex composed of 1 PurL, 1 PurQ and 2 PurS subunits.

The protein localises to the cytoplasm. The enzyme catalyses N(2)-formyl-N(1)-(5-phospho-beta-D-ribosyl)glycinamide + L-glutamine + ATP + H2O = 2-formamido-N(1)-(5-O-phospho-beta-D-ribosyl)acetamidine + L-glutamate + ADP + phosphate + H(+). The catalysed reaction is L-glutamine + H2O = L-glutamate + NH4(+). The protein operates within purine metabolism; IMP biosynthesis via de novo pathway; 5-amino-1-(5-phospho-D-ribosyl)imidazole from N(2)-formyl-N(1)-(5-phospho-D-ribosyl)glycinamide: step 1/2. Part of the phosphoribosylformylglycinamidine synthase complex involved in the purines biosynthetic pathway. Catalyzes the ATP-dependent conversion of formylglycinamide ribonucleotide (FGAR) and glutamine to yield formylglycinamidine ribonucleotide (FGAM) and glutamate. The FGAM synthase complex is composed of three subunits. PurQ produces an ammonia molecule by converting glutamine to glutamate. PurL transfers the ammonia molecule to FGAR to form FGAM in an ATP-dependent manner. PurS interacts with PurQ and PurL and is thought to assist in the transfer of the ammonia molecule from PurQ to PurL. The protein is Phosphoribosylformylglycinamidine synthase subunit PurQ of Thermus thermophilus (strain ATCC 27634 / DSM 579 / HB8).